Consider the following 275-residue polypeptide: Ovocalyxin-32 (275 aa).

Positions 1 to 23 are cleaved as a signal peptide; sequence MPGLRAALPAALLLLSSFPPAAA. 2 consecutive Cystatin LXN-type domains span residues 32–131 and 151–255; these read PGVM…NKKQ and TANY…GLED. The disordered stretch occupies residues 254-275; sequence EDGSGQDSGSAAGTSHETKGNF. The segment covering 256–268 has biased composition (low complexity); that stretch reads GSGQDSGSAAGTS.

This sequence belongs to the protease inhibitor I47 (latexin) family. In terms of tissue distribution, expressed at high levels in the uterine and isthmus regions of the oviduct, and concentrated in the eggshell.

It is found in the secreted. In terms of biological role, component of the matrix of the eggshell. The protein is Ovocalyxin-32 of Gallus gallus (Chicken).